The following is a 122-amino-acid chain: Large ribosomal subunit protein uL14 (122 aa).

It belongs to the universal ribosomal protein uL14 family. Part of the 50S ribosomal subunit. Forms a cluster with proteins L3 and L19. In the 70S ribosome, L14 and L19 interact and together make contacts with the 16S rRNA in bridges B5 and B8.

Functionally, binds to 23S rRNA. Forms part of two intersubunit bridges in the 70S ribosome. The sequence is that of Large ribosomal subunit protein uL14 from Mycobacterium sp. (strain KMS).